The primary structure comprises 1406 residues: Inactive tyrosine-protein kinase PRAG1 (1406 aa).

At S148 the chain carries Phosphoserine. Residues 184-193 (EEKAVHKEKP) are compositionally biased toward basic and acidic residues. Disordered stretches follow at residues 184–205 (EEKAVHKEKPSFPYQDRPSTQE) and 217–248 (TTSGCHQGPGPLRESLPSEDDSDQRCSPSGDS). A phosphotyrosine mark is found at Y253, Y365, and Y413. 2 disordered regions span residues 372–470 (PAPE…TPQV) and 484–854 (DHRT…HSET). The segment covering 526–542 (RESHAHSASESKPKERP) has biased composition (basic and acidic residues). The segment covering 546–576 (PKLSKSSPVGSPVSPSAGGPPVSPLADLSDG) has biased composition (low complexity). 2 stretches are compositionally biased toward polar residues: residues 660–671 (NGPTDHSNSTTW) and 678–695 (DGSSGQNSKVGTGMSKSA). 2 positions are modified to phosphoserine: S696 and S745. 2 stretches are compositionally biased toward polar residues: residues 737-746 (SQGSAESLSP) and 754-770 (SFTTGSTDSLASDSRTC). S782 is subject to Phosphoserine. A compositionally biased stretch (polar residues) spans 798–808 (SGSTEDVSPSG). S826 bears the Phosphoserine mark. The tract at residues 933–976 (STQLQLHGLLSNISSKEGTYAKLGGLYTQSLARLVAKCEDLFMG) is required for homodimerization. Positions 978 to 1329 (QKKELHFNEN…EAKRVLQCLL (352 aa)) constitute a Protein kinase domain. Positions 1163-1173 (GPAPAPAPAPA) are enriched in pro residues. Residues 1163 to 1206 (GPAPAPAPAPAPAAAAPPCSSAAPPAGGTLSPAAGPASPEGPRE) are disordered. Residues 1174-1202 (PAAAAPPCSSAAPPAGGTLSPAAGPASPE) show a composition bias toward low complexity. Residues 1331 to 1406 (GPRRELVQQP…LQSLKLLQLL (76 aa)) form a required for homodimerization region.

It belongs to the protein kinase superfamily. As to quaternary structure, homodimer. Dimerization leads to the catalytic activation of CSK. Interacts (via C-terminus) with RND2. Interacts with CSK (via SH2 domain) in a Tyr-413 phosphorylation-dependent manner; this interaction potentiates kinase activity of CSK. Interacts with PEAK1. Interacts with NOTCH1 intracellular domain (N1ICD). Forms a complex with N1ICD and MAML1, in a MAML1-dependent manner. Post-translationally, phosphorylated by CSK on Tyr-253, Tyr-365, and Tyr-413; Tyr-413 is a primary site of phosphorylation.

The protein localises to the cytoplasm. It is found in the cell junction. The protein resides in the focal adhesion. Its subcellular location is the nucleus. Its function is as follows. Catalytically inactive protein kinase that acts as a scaffold protein. Functions as an effector of the small GTPase RND2, which stimulates RhoA activity and inhibits NGF-induced neurite outgrowth. Promotes Src family kinase (SFK) signaling by regulating the subcellular localization of CSK, a negative regulator of these kinases, leading to the regulation of cell morphology and motility by a CSK-dependent mechanism. Acts as a critical coactivator of Notch signaling. The chain is Inactive tyrosine-protein kinase PRAG1 from Homo sapiens (Human).